The sequence spans 276 residues: MSYGPLDMYRNPGPSGPQLRDFSSIIQTCSGNIQRISQATAQIKNLMSQLGTKQDSSKLQENLQQLQHSTNQLAKETNELLKELGSLPLPLSTSEQRQQRLQKERLMNDFSAALNNFQAVQRRVSEKEKESIARARAGSRLSAEERQREEQLVSFDSHEEWNQMQSQEDEVAITEQDLELIKERETAIRQLEADILDVNQIFKDLAMMIHDQGDLIDSIEANVESSEVHVERATEQLQRAAYYQKKSRKKMCILVLVLSVIILILGLIIWLVYKTK.

Serine 2 is subject to N-acetylserine. The Cytoplasmic segment spans residues 2–248 (SYGPLDMYRN…RAAYYQKKSR (247 aa)). Residues 33-131 (IQRISQATAQ…RRVSEKEKES (99 aa)) are a coiled coil. Phosphoserine is present on residues serine 139, serine 142, serine 218, and serine 225. In terms of domain architecture, t-SNARE coiled-coil homology spans 178 to 240 (LELIKERETA…ERATEQLQRA (63 aa)). Residues 249–269 (KKMCILVLVLSVIILILGLII) form a helical; Anchor for type IV membrane protein membrane-spanning segment. The Vesicular segment spans residues 270 to 276 (WLVYKTK).

This sequence belongs to the syntaxin family. In terms of assembly, interacts with NAPA and SNAP23. Identified in a complex containing STX6, STX12, VAMP4 and VTI1A. Associates with the BLOC-1 complex. Interacts with BLOC1S6. Interacts with GRIPAP1. Forms a complex with GRIP1, GRIA2 and NSG1; controls the intracellular fate of AMPAR and the endosomal sorting of the GRIA2 subunit toward recycling and membrane targeting. Interacts with NSG1. Interacts with TPC1. Interacts (via N-terminus) with VPS13B.

It localises to the endosome membrane. Its subcellular location is the golgi apparatus membrane. It is found in the endomembrane system. The protein localises to the early endosome membrane. The protein resides in the recycling endosome membrane. In terms of biological role, SNARE promoting fusion of transport vesicles with target membranes. Together with SNARE STX6, promotes movement of vesicles from endosomes to the cell membrane, and may therefore function in the endocytic recycling pathway. Through complex formation with GRIP1, GRIA2 and NSG1 controls the intracellular fate of AMPAR and the endosomal sorting of the GRIA2 subunit toward recycling and membrane targeting. In Homo sapiens (Human), this protein is Syntaxin-12 (STX12).